We begin with the raw amino-acid sequence, 825 residues long: Probable phosphoketolase (825 aa).

The protein belongs to the XFP family. Thiamine diphosphate serves as cofactor.

This is Probable phosphoketolase from Bifidobacterium animalis subsp. lactis (strain AD011).